The following is a 502-amino-acid chain: 1-aminocyclopropane-1-carboxylate synthase-like protein 1 (502 aa).

A disordered region spans residues 1 to 24; the sequence is MFCLPQQESTAPTTCTGSASTQDM. Glutamate 106 serves as a coordination point for substrate. The residue at position 324 (lysine 324) is an N6-(pyridoxal phosphate)lysine.

The protein belongs to the class-I pyridoxal-phosphate-dependent aminotransferase family.

In terms of biological role, does not catalyze the synthesis of 1-aminocyclopropane-1-carboxylate but is capable of catalyzing the deamination of L-vinylglycine. The sequence is that of 1-aminocyclopropane-1-carboxylate synthase-like protein 1 (Accs) from Mus musculus (Mouse).